The sequence spans 436 residues: 3-ketoacyl-CoA thiolase (436 aa).

Cys99 (acyl-thioester intermediate) is an active-site residue. Catalysis depends on proton acceptor residues His392 and Cys422.

Belongs to the thiolase-like superfamily. Thiolase family. As to quaternary structure, heterotetramer of two alpha chains (FadJ) and two beta chains (FadI).

It localises to the cytoplasm. The catalysed reaction is an acyl-CoA + acetyl-CoA = a 3-oxoacyl-CoA + CoA. It participates in lipid metabolism; fatty acid beta-oxidation. Functionally, catalyzes the final step of fatty acid oxidation in which acetyl-CoA is released and the CoA ester of a fatty acid two carbons shorter is formed. The protein is 3-ketoacyl-CoA thiolase of Shewanella pealeana (strain ATCC 700345 / ANG-SQ1).